The sequence spans 234 residues: MLTSHFPLPFAGHRLHIVDFDASSFREHDLLWLPHHDRLRSAGRKRKAEHLAGRIAAVHALREVGVRTVPGMGDKRQPLWPDGLFGSISHCATTALAVISRQRIGIDIEKIMSQHTATELAPSIIDSDERQILQASLLPFPLALTLAFSAKESVYKAFSDRVTLPGFNSAKVTSLTATHISLHLLPAFAATMAERTVRTEWFQRDNSVITLVSAITRVPHDRSAPASILSAIPR.

Mg(2+) contacts are provided by aspartate 107, glutamate 109, and glutamate 152.

The protein belongs to the P-Pant transferase superfamily. EntD family. EntB, EntD, EntE, and EntF form a multienzyme complex called enterobactin synthase. Mg(2+) serves as cofactor.

The protein localises to the membrane. The catalysed reaction is apo-[aryl-carrier protein] + CoA = holo-[aryl-carrier protein] + adenosine 3',5'-bisphosphate + H(+). It catalyses the reaction apo-[peptidyl-carrier protein] + CoA = holo-[peptidyl-carrier protein] + adenosine 3',5'-bisphosphate + H(+). It functions in the pathway siderophore biosynthesis; enterobactin biosynthesis. Its function is as follows. Involved in the biosynthesis of the siderophore enterobactin (enterochelin), which is a macrocyclic trimeric lactone of N-(2,3-dihydroxybenzoyl)-serine. The serine trilactone serves as a scaffolding for the three catechol functionalities that provide hexadentate coordination for the tightly ligated iron(2+) atoms. Plays an essential role in the assembly of the enterobactin by catalyzing the transfer of the 4'-phosphopantetheine (Ppant) moiety from coenzyme A to the apo-domains of both EntB (ArCP domain) and EntF (PCP domain) to yield their holo-forms which make them competent for the activation of 2,3-dihydroxybenzoate (DHB) and L-serine, respectively. The polypeptide is Enterobactin synthase component D (Salmonella typhimurium (strain LT2 / SGSC1412 / ATCC 700720)).